Consider the following 336-residue polypeptide: Syntaxin-31 (336 aa).

Residues 1–314 are Cytoplasmic-facing; that stretch reads MGSTFRDRTV…QHLTRISSNR (314 aa). Disordered regions lie at residues 23-53 and 152-218; these read GAIP…KASR and RSEN…SQLR. Residues 154-163 show a composition bias toward basic and acidic residues; that stretch reads ENMKAHENRK. Polar residues predominate over residues 164 to 181; the sequence is QLFSTKNAVDSPPQNNAK. Positions 190 to 202 are enriched in low complexity; the sequence is SSSSNPFGNLQQP. One can recognise a t-SNARE coiled-coil homology domain in the interval 244 to 306; sequence ENYSQSRAVA…EGARSALLQH (63 aa). Residues 315–335 traverse the membrane as a helical; Anchor for type IV membrane protein segment; the sequence is WLMMKIFAVIILFLIVFLFFV. A topological domain (vesicular) is located at residue alanine 336.

The protein belongs to the syntaxin family. As to quaternary structure, part of the t-SNARE complex. Interacts with CDC48A, but not with VPS45.

Its subcellular location is the golgi apparatus. It localises to the cis-Golgi network membrane. It is found in the cytoplasm. The protein localises to the endosome. Its function is as follows. Vesicle trafficking protein that functions in the secretory pathway. In Arabidopsis thaliana (Mouse-ear cress), this protein is Syntaxin-31 (SYP31).